Here is a 469-residue protein sequence, read N- to C-terminus: 3-isopropylmalate dehydratase large subunit (469 aa).

[4Fe-4S] cluster contacts are provided by C347, C410, and C413.

Belongs to the aconitase/IPM isomerase family. LeuC type 1 subfamily. Heterodimer of LeuC and LeuD. It depends on [4Fe-4S] cluster as a cofactor.

It catalyses the reaction (2R,3S)-3-isopropylmalate = (2S)-2-isopropylmalate. Its pathway is amino-acid biosynthesis; L-leucine biosynthesis; L-leucine from 3-methyl-2-oxobutanoate: step 2/4. Its function is as follows. Catalyzes the isomerization between 2-isopropylmalate and 3-isopropylmalate, via the formation of 2-isopropylmaleate. The chain is 3-isopropylmalate dehydratase large subunit from Burkholderia pseudomallei (strain 1106a).